Reading from the N-terminus, the 57-residue chain is uncharacterized protein (57 aa).

A helical membrane pass occupies residues 24–44 (LWVTLLLTMFFTAVEIIGGLI).

It to cation A.eutrophus efflux system protein CzcD.

It localises to the cell membrane. This is an uncharacterized protein from Bacillus caldolyticus.